Here is a 521-residue protein sequence, read N- to C-terminus: Glutamate--tRNA ligase (521 aa).

Positions Pro30 to Gly40 match the 'HIGH' region motif. The short motif at Lys277 to Arg281 is the 'KMSKS' region element. An ATP-binding site is contributed by Lys280.

The protein belongs to the class-I aminoacyl-tRNA synthetase family. Glutamate--tRNA ligase type 1 subfamily. Monomer.

It is found in the cytoplasm. The catalysed reaction is tRNA(Glu) + L-glutamate + ATP = L-glutamyl-tRNA(Glu) + AMP + diphosphate. In terms of biological role, catalyzes the attachment of glutamate to tRNA(Glu) in a two-step reaction: glutamate is first activated by ATP to form Glu-AMP and then transferred to the acceptor end of tRNA(Glu). The sequence is that of Glutamate--tRNA ligase from Chlorobium phaeovibrioides (strain DSM 265 / 1930) (Prosthecochloris vibrioformis (strain DSM 265)).